Reading from the N-terminus, the 260-residue chain is Flap endonuclease Xni (260 aa).

A Mg(2+)-binding site is contributed by Asp-104. The 5'-3' exonuclease domain occupies 160-250 (VSPQQLTDYW…NGNLQQLRLP (91 aa)). The K(+) site is built by Leu-171, Ala-172, Pro-180, Val-182, and Ile-185. The interval 184–189 (GIGPKS) is interaction with DNA.

It belongs to the Xni family. Mg(2+) is required as a cofactor. The cofactor is K(+).

Functionally, has flap endonuclease activity. During DNA replication, flap endonucleases cleave the 5'-overhanging flap structure that is generated by displacement synthesis when DNA polymerase encounters the 5'-end of a downstream Okazaki fragment. The sequence is that of Flap endonuclease Xni from Pectobacterium atrosepticum (strain SCRI 1043 / ATCC BAA-672) (Erwinia carotovora subsp. atroseptica).